The sequence spans 79 residues: MCGGPNKWYIFLIGLVNINNNNNNNNNNNNNNNNNNNNNNNNNNNNNNNNNNNNNNNNNNNNNNNNNNNNNNKRFFFFG.

Over residues 22–72 the composition is skewed to low complexity; it reads NNNNNNNNNNNNNNNNNNNNNNNNNNNNNNNNNNNNNNNNNNNNNNNNNNN. The tract at residues 22-79 is disordered; sequence NNNNNNNNNNNNNNNNNNNNNNNNNNNNNNNNNNNNNNNNNNNNNNNNNNNKRFFFFG.

This is an uncharacterized protein from Dictyostelium discoideum (Social amoeba).